Reading from the N-terminus, the 20-residue chain is IAIQGGXGYLXQPGDGYKYA.

Monomer.

Its subcellular location is the secreted. It carries out the reaction Hydrolysis of (1-&gt;4)-beta-linkages between N-acetylmuramic acid and N-acetyl-D-glucosamine residues in a peptidoglycan and between N-acetyl-D-glucosamine residues in chitodextrins.. In terms of biological role, has bacteriolytic activity. The chain is Lysozyme from Lysobacter sp. (strain XL1).